Reading from the N-terminus, the 407-residue chain is Odorant receptor 67a (407 aa).

Topologically, residues 1–40 (MDNVAEMPEEKYVEVDDFLRLAVKFYNTLGIDPYETGRKR) are cytoplasmic. The helical transmembrane segment at 41–61 (TIWFQIYFALNMFNMVFSFYA) threads the bilayer. Topologically, residues 62–79 (EVATLVDRLRDNENFLES) are extracellular. A helical transmembrane segment spans residues 80 to 100 (CILLSYVSFVVMGLSKIGAVM). The Cytoplasmic portion of the chain corresponds to 101–144 (KKKPKMTALVRQLETCFPSPSAKVQEEYAVKSWLKRCHIYTKGF). A helical transmembrane segment spans residues 145–165 (GGLFMIMYFAHALIPLFIYFI). The Extracellular portion of the chain corresponds to 166–208 (QRVLLHYPDAKQIMPFYQLEPWEFRDSWLFYPSYFHQSSAGYT). The helical transmembrane segment at 209-229 (ATCGSIAGDLMIFAVVLQVIM) threads the bilayer. At 230–278 (HYERLAKVLREFKIQAHNAPNGAKEDIRKLQSLVANHIDILRLTDLMNE) the chain is on the cytoplasmic side. Residues 279–300 (VFGIPLLLNFIASALLVCLVGV) form a helical membrane-spanning segment. At 301–314 (QLTIALSPEYFCKQ) the chain is on the extracellular side. A helical transmembrane segment spans residues 315–331 (MLFLISVLLEVYLLCSF). Residues 332 to 378 (SQRLIDASENVGHAAYDMDWLGSDKRFKKILIFISMRSQKPVCLKAT) are Cytoplasmic-facing. Residues 379 to 401 (VVLDLSMPTMSIFLGMSYKFFCA) form a helical membrane-spanning segment. At 402 to 407 (VRTMYQ) the chain is on the extracellular side.

Belongs to the insect chemoreceptor superfamily. Heteromeric odorant receptor channel (TC 1.A.69) family. Or49a subfamily. As to quaternary structure, interacts with Orco. Complexes exist early in the endomembrane system in olfactory sensory neurons (OSNs), coupling these complexes to the conserved ciliary trafficking pathway. As to expression, expressed in olfactory sensory neurons in the antenna.

The protein localises to the cell membrane. Odorant receptor which mediates acceptance or avoidance behavior, depending on its substrates. The odorant receptor repertoire encodes a large collection of odor stimuli that vary widely in identity, intensity, and duration. Forms a complex with Orco to form odorant-sensing units, providing sensitive and prolonged odorant signaling and calcium permeability. Involved in the behavioral responses to benzaldehyde and acetophenone. The polypeptide is Odorant receptor 67a (Or67a) (Drosophila melanogaster (Fruit fly)).